We begin with the raw amino-acid sequence, 416 residues long: Thioredoxin domain-containing protein 5 homolog (416 aa).

The signal sequence occupies residues 1–25; the sequence is MLTRSILSVAVCGLLLSPLLPITRA. Thioredoxin domains are found at residues 26–145, 150–272, and 293–412; these read SQEE…KELS, ADLG…KMVG, and AGEE…KFLG. 3 cysteine pairs are disulfide-bonded: Cys65/Cys68, Cys194/Cys197, and Cys331/Cys334. The Prevents secretion from ER motif lies at 413–416; the sequence is HDEL.

Belongs to the protein disulfide isomerase family.

The protein resides in the endoplasmic reticulum. It localises to the cell surface. Functionally, possesses thioredoxin activity. Acts as a ligand for Drpr and is required for the phagocytosis of apoptotic cells. Binds to the extracellular region of Drpr and augments Drpr tyrosine phosphorylation. The polypeptide is Thioredoxin domain-containing protein 5 homolog (Drosophila melanogaster (Fruit fly)).